A 417-amino-acid polypeptide reads, in one-letter code: MWPRLVANKILRKSLGSNNFVADFPPNTDQKLIEASGLADERSKSILHNQHKTTLLNYKVFVSTWNVGGIVPDDGLDMEDLLETHKTPCDIYVLGFQEVVPLRASNVLGSDNNKVSTKWNSLIRDALNKRARPHRDEDLSESKGINGISQDFRCIISKQMVGILITVWVRGDLWPYIRYPSVSCVGCGIMGCLGNKGSVSVRFQLHETTFCFVCSHLASGGRDRDERQRNSDVNEILARSSFPRGSSLDLPKKILDHDRVIFLGDLNYRISLPEEKTRLLVESKKWNILLENDQLRMEIMNGQIFRGWQEGIVKFAPTYKYVPNSDLYYGCITYKKDEKKRAPAWCDRIIWYGNGLKQHEYTRGETKISDHRPVKAIFTTEITVTRRGKKIRNFFFSDRFEERIGDIDSKDYSWIST.

Catalytic stretches follow at residues 258–273 (DRVI…ISLP) and 339–354 (KKRA…WYGN).

Belongs to the inositol polyphosphate 5-phosphatase family. Specifically expressed in roots.

It catalyses the reaction a 1,2-diacyl-sn-glycero-3-phospho-(1D-myo-inositol-4,5-bisphosphate) + H2O = a 1,2-diacyl-sn-glycero-3-phospho-(1D-myo-inositol 4-phosphate) + phosphate. It carries out the reaction a 1,2-diacyl-sn-glycero-3-phospho-(1D-myo-inositol-3,4,5-trisphosphate) + H2O = a 1,2-diacyl-sn-glycero-3-phospho-(1D-myo-inositol-3,4-bisphosphate) + phosphate. In terms of biological role, has phosphatase activity toward PtdIns(4,5)P2 and at a lower extent toward PtdIns(3,4,5)P3 but not toward Ins(1,4,5)P3. Functions in salt stress response by regulating reactive oxygen species (ROS) production, endocytosis, Ca(2+) influx and stress-responsive genes expression. The sequence is that of Type IV inositol polyphosphate 5-phosphatase 9 from Arabidopsis thaliana (Mouse-ear cress).